The primary structure comprises 40 residues: U1-ectatotoxin-Eb1a subunit A (40 aa).

The protein belongs to the ectatomin family. Ectatomin-Eq subfamily. As to quaternary structure, heterodimer of subunits A and B; disulfide-linked. Expressed by the venom gland.

It is found in the secreted. Its subcellular location is the target cell membrane. The protein is U1-ectatotoxin-Eb1a subunit A of Ectatomma brunneum (Ant).